We begin with the raw amino-acid sequence, 361 residues long: Protein TIFY 8 (361 aa).

Disordered stretches follow at residues 53 to 78, 113 to 134, 190 to 232, and 268 to 361; these read NKAA…GLSS, RFSG…HPET, QTAA…RKDL, and SGGS…KEAT. The segment covering 56-78 has biased composition (low complexity); sequence AKAAMTPSTASASSAGGLGGLSS. Polar residues-rich tracts occupy residues 113–127 and 208–232; these read RFSG…SHFT and SSFT…RKDL. Residues 232 to 267 form the Tify domain; the sequence is LASSTKQMTIFYGGQAHVFDDVHPNKADVIMALAGS. The span at 333 to 361 shows a compositional bias: basic and acidic residues; sequence GREHQGSIISRGRDIRDPVHRSDPEKEAT.

This sequence belongs to the TIFY/JAZ family. In terms of assembly, interacts with AFPH2/NINJA. In terms of processing, ubiquitinated. Targeted for degradation by the SCF(COI1) E3 ubiquitin ligase-proteasome pathway during jasmonate signaling.

The protein resides in the nucleus. Its function is as follows. Repressor of jasmonate responses. This chain is Protein TIFY 8, found in Arabidopsis thaliana (Mouse-ear cress).